The sequence spans 129 residues: Procyclic form-specific polypeptide A-beta (129 aa).

Residues Met-1–Ala-27 form the signal peptide. Positions Ala-27–Leu-111 are disordered. A compositionally biased stretch (acidic residues) spans Asp-53–Pro-104. N-linked (GlcNAc...) asparagine glycosylation occurs at Asn-56. 24 consecutive repeat copies span residues Asp-59–Pro-60, Asp-61–Pro-62, Glu-63–Pro-64, Glu-65–Pro-66, Glu-67–Pro-68, Glu-69–Pro-70, Glu-71–Pro-72, Glu-73–Pro-74, Glu-75–Pro-76, Glu-77–Pro-78, Glu-79–Pro-80, Glu-81–Pro-82, Glu-83–Pro-84, Glu-85–Pro-86, Glu-87–Pro-88, Glu-89–Pro-90, Glu-91–Pro-92, Glu-93–Pro-94, Glu-95–Pro-96, Glu-97–Pro-98, Glu-99–Pro-100, Glu-101–Pro-102, Glu-103–Pro-104, and Glu-105–Pro-106. The tract at residues Asp-59–Pro-106 is 24 X 2 AA tandem repeats of [DE]-P. Gly-107 carries GPI-anchor amidated glycine lipidation. The propeptide occupies Ala-108–Phe-129.

It localises to the cell membrane. Functionally, major surface antigen of procyclic forms. In Trypanosoma brucei brucei, this protein is Procyclic form-specific polypeptide A-beta (PARPA-BETA).